We begin with the raw amino-acid sequence, 424 residues long: MKIEMICTGEEVLSGQIVDTNAAWAANALMDHGIEMQQRITVGDRLDDLVEVFRQRSEHADVILVNGGLGPTSDDMSSEAMAIAKGEPLVECTLWRERIQEWFTRNGRHMPESNLKQAMLPASAIMVDNPVGTACGFRVKLNRAWLFFTPGVPFEFKKMVTEQFIPFVEQIADSHIEVEVQKLLTIGQGESALADKLEGMPLPDGMTLGYRSFMPYIEIKLFARGEAAIGELDRVKAEVLTRLGDAVVGHNVASLAQVIHNGLLASGKRLSIAESCTGGMIANNLVAFAGSSNYLDQGLVTYSNESKVRVLGVKPATLDDHGAVSIATVEEMAKGARGLLDSDYALATSGIAGPDGGSEAKPVGTVAIALATRQGVYSQMLKFPARSRELVRQLSTAVALDMLRRELQESPVLVDYSSYPRFAR.

Belongs to the CinA family.

In Shewanella loihica (strain ATCC BAA-1088 / PV-4), this protein is CinA-like protein.